We begin with the raw amino-acid sequence, 482 residues long: Proline--tRNA ligase (482 aa).

Belongs to the class-II aminoacyl-tRNA synthetase family. ProS type 3 subfamily. In terms of assembly, homodimer.

It is found in the cytoplasm. It catalyses the reaction tRNA(Pro) + L-proline + ATP = L-prolyl-tRNA(Pro) + AMP + diphosphate. Functionally, catalyzes the attachment of proline to tRNA(Pro) in a two-step reaction: proline is first activated by ATP to form Pro-AMP and then transferred to the acceptor end of tRNA(Pro). This chain is Proline--tRNA ligase, found in Thermofilum pendens (strain DSM 2475 / Hrk 5).